Consider the following 389-residue polypeptide: MASELFATYYPRVVEAAQQLAPWQIAAGVTAAVVIGGYIWIITELRSPRRTGTSLFKLSGGGIKKHDVAKFMDGYEKSYKTQEDGALTWHHISKEDSVKMVNTFYDLVTDAYEWAWDISFHFSCRPVWANFAQAQVLHECRIANLARIQPGMKVIDVGTGVGNPGRTIASLTGAHVTGVTINAYQIKRALHHTKKAGLLDMYKPVQADFTDMPFADESFDAAFAIEATCHAPKLEQVYAEVYRVLKPGAYFAVYEAVSKPNFDPKNKRHVEIINSLVYGNGIPDMRTWKEAEEAGKKVGFKLHFSYDAGEASSVLAPWWERPRNLVNTGVIAYTKFAIKVCDKIGILPRDYAKFAKCVGDCIPDAVESGELGIFTPMYVYVWQKPEKST.

The helical transmembrane segment at 25–45 (IAAGVTAAVVIGGYIWIITEL) threads the bilayer.

It belongs to the class I-like SAM-binding methyltransferase superfamily. Erg6/SMT family.

Its subcellular location is the microsome membrane. Unable to convert squalene, botryococcene, cycloartenol, zymosterol or lanosterol to mono-, di-, tri- or tetramethylated derivatives. This chain is Sterol methyltransferase-like 1 (SMT-1), found in Botryococcus braunii (Green alga).